The chain runs to 734 residues: Subtilisin-like protease SBT3.2 (734 aa).

An N-terminal signal peptide occupies residues 1–19; the sequence is MTRALILVAICLMLTLNNA. Residues 20-88 constitute a propeptide, activation peptide; it reads AETKVHIVYL…ESTLRFYELQ (69 aa). The region spanning 92–581 is the Peptidase S8 domain; sequence TWDYLQHTSK…GGVVNSEKAA (490 aa). Asn108 is a glycosylation site (N-linked (GlcNAc...) asparagine). The active-site Charge relay system is the Asp122. Asn143 is a glycosylation site (N-linked (GlcNAc...) asparagine). The active-site Charge relay system is His179. 2 N-linked (GlcNAc...) asparagine glycosylation sites follow: Asn326 and Asn355. In terms of domain architecture, PA spans 361 to 438; that stretch reads VCEDLAKNPA…ELGTDILFYI (78 aa). The N-linked (GlcNAc...) asparagine glycan is linked to Asn497. Ser512 serves as the catalytic Charge relay system. Asn669 carries an N-linked (GlcNAc...) asparagine glycan.

Belongs to the peptidase S8 family.

The protein resides in the secreted. This is Subtilisin-like protease SBT3.2 from Arabidopsis thaliana (Mouse-ear cress).